The chain runs to 424 residues: Imidazolonepropionase (424 aa).

Fe(3+) is bound by residues H85 and H87. Positions 85 and 87 each coordinate Zn(2+). 3 residues coordinate 4-imidazolone-5-propanoate: R94, Y157, and H190. Y157 serves as a coordination point for N-formimidoyl-L-glutamate. A Fe(3+)-binding site is contributed by H255. H255 serves as a coordination point for Zn(2+). E258 contributes to the 4-imidazolone-5-propanoate binding site. D329 lines the Fe(3+) pocket. D329 provides a ligand contact to Zn(2+). N-formimidoyl-L-glutamate-binding residues include N331 and G333. S334 lines the 4-imidazolone-5-propanoate pocket.

Belongs to the metallo-dependent hydrolases superfamily. HutI family. Requires Zn(2+) as cofactor. Fe(3+) is required as a cofactor.

Its subcellular location is the cytoplasm. It catalyses the reaction 4-imidazolone-5-propanoate + H2O = N-formimidoyl-L-glutamate. It participates in amino-acid degradation; L-histidine degradation into L-glutamate; N-formimidoyl-L-glutamate from L-histidine: step 3/3. In terms of biological role, catalyzes the hydrolytic cleavage of the carbon-nitrogen bond in imidazolone-5-propanoate to yield N-formimidoyl-L-glutamate. It is the third step in the universal histidine degradation pathway. The chain is Imidazolonepropionase from Brevibacillus brevis (strain 47 / JCM 6285 / NBRC 100599).